We begin with the raw amino-acid sequence, 122 residues long: Large ribosomal subunit protein uL18 (122 aa).

Residues methionine 1 to glutamine 26 form a disordered region. A compositionally biased stretch (basic residues) spans glutamine 9–lysine 22.

The protein belongs to the universal ribosomal protein uL18 family. In terms of assembly, part of the 50S ribosomal subunit; part of the 5S rRNA/L5/L18/L25 subcomplex. Contacts the 5S and 23S rRNAs.

Functionally, this is one of the proteins that bind and probably mediate the attachment of the 5S RNA into the large ribosomal subunit, where it forms part of the central protuberance. In Prochlorococcus marinus (strain MIT 9313), this protein is Large ribosomal subunit protein uL18.